Here is a 476-residue protein sequence, read N- to C-terminus: Glycogen synthase (476 aa).

Lysine 15 contributes to the ADP-alpha-D-glucose binding site.

This sequence belongs to the glycosyltransferase 1 family. Bacterial/plant glycogen synthase subfamily.

It carries out the reaction [(1-&gt;4)-alpha-D-glucosyl](n) + ADP-alpha-D-glucose = [(1-&gt;4)-alpha-D-glucosyl](n+1) + ADP + H(+). The protein operates within glycan biosynthesis; glycogen biosynthesis. Its function is as follows. Synthesizes alpha-1,4-glucan chains using ADP-glucose. This is Glycogen synthase from Streptococcus mutans serotype c (strain ATCC 700610 / UA159).